The chain runs to 341 residues: Retinol dehydrogenase 10 (341 aa).

Residues 3 to 23 (IVVEFFLVTFKVLWAFVLAAA) form a helical; Signal-anchor membrane-spanning segment. Residue 40 to 64 (LITGAGSGLGRLFALEFARRRALLV) participates in NADP(+) binding. Residue Ser-197 coordinates substrate. Residue Tyr-210 is the Proton acceptor of the active site.

Belongs to the short-chain dehydrogenases/reductases (SDR) family. Detected in retina, entire eyecups and in liver (at protein level).

Its subcellular location is the microsome membrane. It is found in the endoplasmic reticulum membrane. It catalyses the reaction all-trans-retinol + NADP(+) = all-trans-retinal + NADPH + H(+). It participates in cofactor metabolism; retinol metabolism. Retinol dehydrogenase with a clear preference for NADP. Converts all-trans-retinol to all-trans-retinal. In Rattus norvegicus (Rat), this protein is Retinol dehydrogenase 10 (Rdh10).